The primary structure comprises 371 residues: 2-aminoethylphosphonate--pyruvate transaminase (371 aa).

N6-(pyridoxal phosphate)lysine is present on Lys195.

Belongs to the class-V pyridoxal-phosphate-dependent aminotransferase family. PhnW subfamily. As to quaternary structure, homodimer. Pyridoxal 5'-phosphate is required as a cofactor.

The catalysed reaction is (2-aminoethyl)phosphonate + pyruvate = phosphonoacetaldehyde + L-alanine. Involved in phosphonate degradation. The chain is 2-aminoethylphosphonate--pyruvate transaminase from Pseudomonas aeruginosa (strain UCBPP-PA14).